Here is a 688-residue protein sequence, read N- to C-terminus: Elongation factor G (688 aa).

The tr-type G domain occupies 8–282 (EKTRNIGIMA…AIIDYLPSPM (275 aa)). GTP is bound by residues 17 to 24 (AHIDAGKT), 81 to 85 (DTPGH), and 135 to 138 (NKMD).

This sequence belongs to the TRAFAC class translation factor GTPase superfamily. Classic translation factor GTPase family. EF-G/EF-2 subfamily.

It localises to the cytoplasm. Its function is as follows. Catalyzes the GTP-dependent ribosomal translocation step during translation elongation. During this step, the ribosome changes from the pre-translocational (PRE) to the post-translocational (POST) state as the newly formed A-site-bound peptidyl-tRNA and P-site-bound deacylated tRNA move to the P and E sites, respectively. Catalyzes the coordinated movement of the two tRNA molecules, the mRNA and conformational changes in the ribosome. The protein is Elongation factor G (fusA) of Apple proliferation phytoplasma.